The primary structure comprises 516 residues: MTCPDKLGQLINWFVCSLCAPRVCKLWSSRRPRTRRNLLLGTACAIYLGFLVSQVGKGSFQHGQATNRGPPNNQDIFKVPFPEIPLDGTLAPPESQGNGSTLQPNVVYITLRSKRSKPANIRGTVKPKRRKKYAVASVAPDQEVLVRPSLIQPEVARAADAEVPGYVQGYLTKVGERPWRMLHGPRVRGSNLQQPRAPESNIRIYSESAPSWLSKEDIRRMRLLADGEVASILPTIFEGGTRLLMLEGSTSGSVPGCGPSPCGLLKQPLDMSEVFAFHLDRILGLNRTLPSVSRKLEFIQDGRPRPIILWDSSLVPSSNVSHSSVKITWGTYQQLLKQKCWLNGRVPRPEWGCTEVHHHEWSKMALFDFLLQIYNRLDTNCCGFRPRKEDACVQNGLRPNCEDQSSVTLAHIIQRKNDPRHLVFINNKGFFDRSEDNLNFKLLEGIREFPESAVSVLKSQHLRQKLLQSLFLDQVYWESQGGRQGIEKLIDVIERRARILITYINAHGARVLPMNE.

At 1–37 (MTCPDKLGQLINWFVCSLCAPRVCKLWSSRRPRTRRN) the chain is on the cytoplasmic side. The helical; Signal-anchor for type II membrane protein transmembrane segment at 38 to 55 (LLLGTACAIYLGFLVSQV) threads the bilayer. Residues 56-516 (GKGSFQHGQA…HGARVLPMNE (461 aa)) are Extracellular-facing. A glycan (N-linked (GlcNAc...) asparagine) is linked at N286.

The protein belongs to the GASK family.

The protein localises to the golgi apparatus membrane. The chain is Golgi-associated kinase 1B from Rattus norvegicus (Rat).